The primary structure comprises 352 residues: Ion-translocating oxidoreductase complex subunit D (352 aa).

The next 4 helical transmembrane spans lie at 20–40 (IMLLVLLAAVPGIAAQLWFFG), 42–62 (GTLVQILLASVSTLLAEALVL), 89–109 (IPPLAPWWMVVLGTVFAVIIA), and 123–143 (PAMIGYVVLLISFPVQMTSWL). Residue threonine 187 is modified to FMN phosphoryl threonine. A run of 5 helical transmembrane segments spans residues 214 to 234 (ILAGAGWQWVNLAWLAGGLWL), 242 to 262 (WHIPLSFLVTLALCATLGWLF), 267 to 287 (LAAPQIHLLSGATMLGAFFIL), 301 to 321 (LIFGALAGLLVWLIRSFGGYP), and 322 to 342 (DGVAFAVLLANITVPLIDYYT).

The protein belongs to the NqrB/RnfD family. As to quaternary structure, the complex is composed of six subunits: RsxA, RsxB, RsxC, RsxD, RsxE and RsxG. FMN is required as a cofactor.

The protein resides in the cell inner membrane. In terms of biological role, part of a membrane-bound complex that couples electron transfer with translocation of ions across the membrane. Required to maintain the reduced state of SoxR. The protein is Ion-translocating oxidoreductase complex subunit D of Shigella sonnei (strain Ss046).